The chain runs to 199 residues: Glycerol-3-phosphate acyltransferase (199 aa).

A run of 5 helical transmembrane segments spans residues 3 to 23 (AAVWTLLLAYLFGSIPAGVLV), 50 to 70 (WGPALVVAFFDVFKGGIAVLV), 78 to 98 (DWMLGGVALMAVLGHNYSVFL), 113 to 133 (LLFLDPALALWTFPIGLSVIL), and 154 to 174 (LALGRPLWEVATVFLMALLIF).

The protein belongs to the PlsY family. As to quaternary structure, probably interacts with PlsX.

Its subcellular location is the cell inner membrane. It carries out the reaction an acyl phosphate + sn-glycerol 3-phosphate = a 1-acyl-sn-glycero-3-phosphate + phosphate. It participates in lipid metabolism; phospholipid metabolism. Catalyzes the transfer of an acyl group from acyl-phosphate (acyl-PO(4)) to glycerol-3-phosphate (G3P) to form lysophosphatidic acid (LPA). This enzyme utilizes acyl-phosphate as fatty acyl donor, but not acyl-CoA or acyl-ACP. The protein is Glycerol-3-phosphate acyltransferase of Thermus thermophilus (strain ATCC BAA-163 / DSM 7039 / HB27).